A 285-amino-acid polypeptide reads, in one-letter code: MTHNHDPYSDAAALKGLTLGQATAYQAEYDASLLQGVPRKLNRDAIQLSGELPFHGTDIWTGYELSWLNAKGKPVVAILEVQLDINSVNLIESKSFKLYLNSFNQTKFDSVEAVQETLSRDLAACAEGEVTVKVIEPKHFNLERIIDLPGTCIDDLDIEVTEYEFNPDHLIGGTDPDKNVAETLNSNLLKSNCLITSQPDWGSVMVRYQGPKIDREKLLRYLISFRQHNEFHEQCVERIFVDLKKYCQCTKLTVYARYTRRGGLDINPYRSDFENPPESNRLARQ.

Substrate is bound at residue 91-93; sequence IES. An NADPH-binding site is contributed by 93–94; sequence SK. Cys193 serves as the catalytic Thioimide intermediate. The Proton donor role is filled by Asp200. 232–233 lines the substrate pocket; it reads HE. 261–262 contacts NADPH; the sequence is RG.

Belongs to the GTP cyclohydrolase I family. QueF type 2 subfamily. Homodimer.

Its subcellular location is the cytoplasm. The enzyme catalyses 7-aminomethyl-7-carbaguanine + 2 NADP(+) = 7-cyano-7-deazaguanine + 2 NADPH + 3 H(+). Its pathway is tRNA modification; tRNA-queuosine biosynthesis. Catalyzes the NADPH-dependent reduction of 7-cyano-7-deazaguanine (preQ0) to 7-aminomethyl-7-deazaguanine (preQ1). In Shewanella frigidimarina (strain NCIMB 400), this protein is NADPH-dependent 7-cyano-7-deazaguanine reductase.